Reading from the N-terminus, the 214-residue chain is S-crystallin 1 (214 aa).

Positions 2-79 (PSYTLHYFNH…YLAREFGFHG (78 aa)) constitute a GST N-terminal domain. Residues 81 to 214 (NNMEMARVDF…YLQRRCRTDF (134 aa)) form the GST C-terminal domain.

This sequence belongs to the GST superfamily. Lens.

Its function is as follows. S-crystallins are structural components of squids and octopi eye lens. Contains relatively little GST activity (1/1000 of that of mammalian GST enzyme). This chain is S-crystallin 1 (OCTS1), found in Octopus vulgaris (Common octopus).